The following is a 209-amino-acid chain: N-(5'-phosphoribosyl)anthranilate isomerase (209 aa).

It belongs to the TrpF family.

The enzyme catalyses N-(5-phospho-beta-D-ribosyl)anthranilate = 1-(2-carboxyphenylamino)-1-deoxy-D-ribulose 5-phosphate. Its pathway is amino-acid biosynthesis; L-tryptophan biosynthesis; L-tryptophan from chorismate: step 3/5. The sequence is that of N-(5'-phosphoribosyl)anthranilate isomerase from Granulibacter bethesdensis (strain ATCC BAA-1260 / CGDNIH1).